A 222-amino-acid chain; its full sequence is Probable transcriptional regulator ycf29 (222 aa).

The 117-residue stretch at 4-120 folds into the Response regulatory domain; that stretch reads KLMLVENDIV…ELLSIINNLI (117 aa). Position 53 is a 4-aspartylphosphate (Asp-53). In terms of domain architecture, HTH luxR-type spans 139 to 204; the sequence is QLNHKIRLTP…LLVKYSINNN (66 aa). A DNA-binding region (H-T-H motif) is located at residues 163–182; it reads NKEISTILNTSVRNVEKYVS.

It localises to the plastid. The protein resides in the chloroplast. This Pyropia yezoensis (Susabi-nori) protein is Probable transcriptional regulator ycf29 (ycf29).